Here is a 613-residue protein sequence, read N- to C-terminus: Probable LRR receptor-like serine/threonine-protein kinase At5g10290 (613 aa).

An N-terminal signal peptide occupies residues 1–31 (MRMFSLQKMAMAFTLLFFACLCSFVSPDAQG). Topologically, residues 32–225 (DALFALRISL…SGDSSKPKTG (194 aa)) are extracellular. Residues asparagine 81 and asparagine 116 are each glycosylated (N-linked (GlcNAc...) asparagine). LRR repeat units lie at residues 95–117 (NLKT…FGNL), 119–141 (SLTS…IGNL), 143–166 (KLQF…TGLP), and 167–189 (NLLN…LFEI). Asparagine 155 carries an N-linked (GlcNAc...) asparagine glycan. N-linked (GlcNAc...) asparagine glycosylation occurs at asparagine 193. The chain crosses the membrane as a helical span at residues 226–246 (IIAGVVAGVTVVLFGILLFLF). The Cytoplasmic portion of the chain corresponds to 247 to 613 (CKDRHKGYRR…QDAIELSGGR (367 aa)). Position 287 is a phosphothreonine (threonine 287). In terms of domain architecture, Protein kinase spans 290–569 (FSEKNVLGQG…VVRMLEGEGL (280 aa)). Position 296 to 304 (296 to 304 (LGQGGFGKV)) interacts with ATP. Phosphothreonine is present on threonine 313. ATP is bound at residue lysine 318. The residue at position 371 (serine 371) is a Phosphoserine. The residue at position 390 (threonine 390) is a Phosphothreonine. Catalysis depends on aspartate 417, which acts as the Proton acceptor. Phosphothreonine occurs at positions 450, 451, and 456. Tyrosine 464 bears the Phosphotyrosine mark. Position 466 is a phosphoserine (serine 466). At threonine 467 the chain carries Phosphothreonine. Serine 471 is modified (phosphoserine). Threonine 547 bears the Phosphothreonine mark.

It belongs to the protein kinase superfamily. Ser/Thr protein kinase family.

Its subcellular location is the cell membrane. It carries out the reaction L-seryl-[protein] + ATP = O-phospho-L-seryl-[protein] + ADP + H(+). It catalyses the reaction L-threonyl-[protein] + ATP = O-phospho-L-threonyl-[protein] + ADP + H(+). The chain is Probable LRR receptor-like serine/threonine-protein kinase At5g10290 from Arabidopsis thaliana (Mouse-ear cress).